Here is an 82-residue protein sequence, read N- to C-terminus: DNA-directed RNA polymerase subunit omega (82 aa).

The protein belongs to the RNA polymerase subunit omega family. In terms of assembly, in cyanobacteria the RNAP catalytic core is composed of 2 alpha, 1 beta, 1 beta', 1 gamma and 1 omega subunit. When a sigma factor is associated with the core the holoenzyme is formed, which can initiate transcription.

The catalysed reaction is RNA(n) + a ribonucleoside 5'-triphosphate = RNA(n+1) + diphosphate. Promotes RNA polymerase assembly. Latches the N- and C-terminal regions of the beta' subunit thereby facilitating its interaction with the beta and alpha subunits. The sequence is that of DNA-directed RNA polymerase subunit omega from Synechococcus sp. (strain CC9902).